The primary structure comprises 334 residues: Probable tRNA pseudouridine synthase B (334 aa).

Asp82 serves as the catalytic Nucleophile. The region spanning 250 to 325 (LPKVWIRDSA…IAVDVDKVFM (76 aa)) is the PUA domain.

Belongs to the pseudouridine synthase TruB family. Type 2 subfamily.

The catalysed reaction is uridine(55) in tRNA = pseudouridine(55) in tRNA. Functionally, could be responsible for synthesis of pseudouridine from uracil-55 in the psi GC loop of transfer RNAs. The sequence is that of Probable tRNA pseudouridine synthase B from Thermococcus onnurineus (strain NA1).